A 121-amino-acid chain; its full sequence is Acid shock protein (121 aa).

A signal peptide spans Met1–Ala21. The propeptide occupies Ala22–Gln63. The interval Ala40–Ala121 is disordered. Over residues Ala84–Ser93 the composition is skewed to basic residues. A compositionally biased stretch (low complexity) spans Val94–Gln103. Over residues Ala104–Lys113 the composition is skewed to basic residues.

It belongs to the Asr family. Post-translationally, proteolytic processing gives rise to the active protein.

Its subcellular location is the periplasm. In terms of biological role, required for growth and/or survival at acidic conditions. In Yersinia pestis bv. Antiqua (strain Antiqua), this protein is Acid shock protein.